We begin with the raw amino-acid sequence, 338 residues long: Tetraacyldisaccharide 4'-kinase (338 aa).

66 to 73 (IAGGAGKT) serves as a coordination point for ATP.

It belongs to the LpxK family.

It catalyses the reaction a lipid A disaccharide + ATP = a lipid IVA + ADP + H(+). The protein operates within glycolipid biosynthesis; lipid IV(A) biosynthesis; lipid IV(A) from (3R)-3-hydroxytetradecanoyl-[acyl-carrier-protein] and UDP-N-acetyl-alpha-D-glucosamine: step 6/6. Transfers the gamma-phosphate of ATP to the 4'-position of a tetraacyldisaccharide 1-phosphate intermediate (termed DS-1-P) to form tetraacyldisaccharide 1,4'-bis-phosphate (lipid IVA). The protein is Tetraacyldisaccharide 4'-kinase of Delftia acidovorans (strain DSM 14801 / SPH-1).